Consider the following 123-residue polypeptide: Large ribosomal subunit protein bL17 (123 aa).

Belongs to the bacterial ribosomal protein bL17 family. Part of the 50S ribosomal subunit. Contacts protein L32.

This is Large ribosomal subunit protein bL17 from Borrelia hermsii (strain HS1 / DAH).